Here is a 425-residue protein sequence, read N- to C-terminus: Kynureninase (425 aa).

Pyridoxal 5'-phosphate is bound by residues leucine 105, threonine 106, 133-136, aspartate 218, histidine 221, and tyrosine 243; that span reads FPSD. Position 244 is an N6-(pyridoxal phosphate)lysine (lysine 244). Positions 274 and 302 each coordinate pyridoxal 5'-phosphate.

This sequence belongs to the kynureninase family. As to quaternary structure, homodimer. It depends on pyridoxal 5'-phosphate as a cofactor.

The enzyme catalyses L-kynurenine + H2O = anthranilate + L-alanine + H(+). It catalyses the reaction 3-hydroxy-L-kynurenine + H2O = 3-hydroxyanthranilate + L-alanine + H(+). Its pathway is amino-acid degradation; L-kynurenine degradation; L-alanine and anthranilate from L-kynurenine: step 1/1. It participates in cofactor biosynthesis; NAD(+) biosynthesis; quinolinate from L-kynurenine: step 2/3. Catalyzes the cleavage of L-kynurenine (L-Kyn) and L-3-hydroxykynurenine (L-3OHKyn) into anthranilic acid (AA) and 3-hydroxyanthranilic acid (3-OHAA), respectively. The protein is Kynureninase of Flavobacterium johnsoniae (strain ATCC 17061 / DSM 2064 / JCM 8514 / BCRC 14874 / CCUG 350202 / NBRC 14942 / NCIMB 11054 / UW101) (Cytophaga johnsonae).